Consider the following 709-residue polypeptide: Frizzled-6 (709 aa).

Residues methionine 1–glycine 18 form the signal peptide. One can recognise an FZ domain in the interval histidine 19–threonine 132. Residues histidine 19–phenylalanine 201 are Extracellular-facing. Cystine bridges form between cysteine 24–cysteine 85, cysteine 32–cysteine 78, cysteine 69–cysteine 106, cysteine 95–cysteine 129, and cysteine 99–cysteine 123. N-linked (GlcNAc...) asparagine glycosylation is present at asparagine 38. Residues isoleucine 202–isoleucine 222 form a helical membrane-spanning segment. Residues aspartate 223–proline 233 are Cytoplasmic-facing. A helical transmembrane segment spans residues isoleucine 234–leucine 254. The Extracellular segment spans residues glycine 255–valine 284. An N-linked (GlcNAc...) asparagine glycan is attached at asparagine 256. The chain crosses the membrane as a helical span at residues valine 285 to isoleucine 305. The Cytoplasmic segment spans residues threonine 306–alanine 324. The helical transmembrane segment at valine 325–methionine 345 threads the bilayer. Topologically, residues asparagine 346 to phenylalanine 370 are extracellular. N-linked (GlcNAc...) asparagine glycosylation is present at asparagine 352. Residues valine 371–isoleucine 391 form a helical membrane-spanning segment. The Cytoplasmic segment spans residues serine 392–arginine 416. A helical transmembrane segment spans residues isoleucine 417–tyrosine 437. Residues glutamate 438–leucine 473 lie on the Extracellular side of the membrane. A helical transmembrane segment spans residues alanine 474 to valine 494. The Cytoplasmic portion of the chain corresponds to glycine 495–alanine 709. Positions lysine 498–tryptophan 503 match the Lys-Thr-X-X-X-Trp motif, mediates interaction with the PDZ domain of Dvl family members motif. Residues glutamine 583–glutamate 594 show a composition bias toward polar residues. Residues glutamine 583–alanine 709 are disordered. Over residues serine 596 to glycine 616 the composition is skewed to basic and acidic residues. The segment covering glycine 620–arginine 629 has biased composition (polar residues). The span at asparagine 630–asparagine 644 shows a compositional bias: basic and acidic residues. Phosphoserine is present on serine 656. Polar residues predominate over residues cysteine 669 to proline 690. Positions alanine 697–alanine 709 are enriched in basic and acidic residues.

It belongs to the G-protein coupled receptor Fz/Smo family. As to quaternary structure, interacts with LMBR1L. In terms of processing, ubiquitinated by ZNRF3, leading to its degradation by the proteasome. As to expression, expressed in both hair cells and supporting cells in the utricle, saccule, cristae and the organ of Corti in the inner ear (at protein level).

The protein localises to the membrane. It is found in the cell membrane. Its subcellular location is the cell surface. It localises to the apical cell membrane. The protein resides in the cytoplasmic vesicle membrane. The protein localises to the endoplasmic reticulum membrane. In terms of biological role, receptor for Wnt proteins. Most of frizzled receptors are coupled to the beta-catenin canonical signaling pathway, which leads to the activation of disheveled proteins, inhibition of GSK-3 kinase, nuclear accumulation of beta-catenin and activation of Wnt target genes. A second signaling pathway involving PKC and calcium fluxes has been seen for some family members, but it is not yet clear if it represents a distinct pathway or if it can be integrated in the canonical pathway, as PKC seems to be required for Wnt-mediated inactivation of GSK-3 kinase. Both pathways seem to involve interactions with G-proteins. Activation by Wnt5A stimulates PKC activity via a G-protein-dependent mechanism. Involved in transduction and intercellular transmission of polarity information during tissue morphogenesis and/or in differentiated tissues. Together with FZD3, is involved in the neural tube closure and plays a role in the regulation of the establishment of planar cell polarity (PCP), particularly in the orientation of asymmetric bundles of stereocilia on the apical faces of a subset of auditory and vestibular sensory cells located in the inner ear. This Mus musculus (Mouse) protein is Frizzled-6 (Fzd6).